The sequence spans 130 residues: DNA-directed RNA polymerase subunit omega (130 aa).

Disordered stretches follow at residues 79–98 (EPES…VDAD) and 108–130 (TEEE…EEDE).

Belongs to the RNA polymerase subunit omega family. The RNAP catalytic core consists of 2 alpha, 1 beta, 1 beta' and 1 omega subunit. When a sigma factor is associated with the core the holoenzyme is formed, which can initiate transcription.

It catalyses the reaction RNA(n) + a ribonucleoside 5'-triphosphate = RNA(n+1) + diphosphate. Its function is as follows. Promotes RNA polymerase assembly. Latches the N- and C-terminal regions of the beta' subunit thereby facilitating its interaction with the beta and alpha subunits. The polypeptide is DNA-directed RNA polymerase subunit omega (Nitrobacter winogradskyi (strain ATCC 25391 / DSM 10237 / CIP 104748 / NCIMB 11846 / Nb-255)).